Reading from the N-terminus, the 385-residue chain is Cell division protein FtsZ (385 aa).

GTP-binding positions include 20–24 (GGGGN), 107–109 (GTG), E138, R142, and N186.

It belongs to the FtsZ family. As to quaternary structure, homodimer. Polymerizes to form a dynamic ring structure in a strictly GTP-dependent manner. Interacts directly with several other division proteins.

The protein localises to the cytoplasm. Functionally, essential cell division protein that forms a contractile ring structure (Z ring) at the future cell division site. The regulation of the ring assembly controls the timing and the location of cell division. One of the functions of the FtsZ ring is to recruit other cell division proteins to the septum to produce a new cell wall between the dividing cells. Binds GTP and shows GTPase activity. The polypeptide is Cell division protein FtsZ (Buchnera aphidicola subsp. Baizongia pistaciae (strain Bp)).